The primary structure comprises 413 residues: L-cysteine:1D-myo-inositol 2-amino-2-deoxy-alpha-D-glucopyranoside ligase (413 aa).

Zn(2+) is bound at residue cysteine 43. L-cysteinyl-5'-AMP-binding positions include 43–46 (CGIT), threonine 58, and 81–83 (NIT). The 'HIGH' region motif lies at 45 to 55 (ITPYDATHLGH). The 'ERGGDP' region signature appears at 187–192 (ERGGDP). Residue tryptophan 227 participates in L-cysteinyl-5'-AMP binding. A Zn(2+)-binding site is contributed by cysteine 231. 249–251 (GND) provides a ligand contact to L-cysteinyl-5'-AMP. Residue histidine 256 participates in Zn(2+) binding. Residue valine 283 coordinates L-cysteinyl-5'-AMP. The 'KMSKS' region signature appears at 289-293 (KMSKS).

Belongs to the class-I aminoacyl-tRNA synthetase family. MshC subfamily. In terms of assembly, monomer. Zn(2+) is required as a cofactor.

It carries out the reaction 1D-myo-inositol 2-amino-2-deoxy-alpha-D-glucopyranoside + L-cysteine + ATP = 1D-myo-inositol 2-(L-cysteinylamino)-2-deoxy-alpha-D-glucopyranoside + AMP + diphosphate + H(+). Its function is as follows. Catalyzes the ATP-dependent condensation of GlcN-Ins and L-cysteine to form L-Cys-GlcN-Ins. This Gordonia bronchialis (strain ATCC 25592 / DSM 43247 / BCRC 13721 / JCM 3198 / KCTC 3076 / NBRC 16047 / NCTC 10667) (Rhodococcus bronchialis) protein is L-cysteine:1D-myo-inositol 2-amino-2-deoxy-alpha-D-glucopyranoside ligase.